A 273-amino-acid chain; its full sequence is Putative pyruvate, phosphate dikinase regulatory protein (273 aa).

Residue 153-160 (GISRTSKT) participates in ADP binding.

This sequence belongs to the pyruvate, phosphate/water dikinase regulatory protein family. PDRP subfamily.

The enzyme catalyses N(tele)-phospho-L-histidyl/L-threonyl-[pyruvate, phosphate dikinase] + ADP = N(tele)-phospho-L-histidyl/O-phospho-L-threonyl-[pyruvate, phosphate dikinase] + AMP + H(+). It catalyses the reaction N(tele)-phospho-L-histidyl/O-phospho-L-threonyl-[pyruvate, phosphate dikinase] + phosphate + H(+) = N(tele)-phospho-L-histidyl/L-threonyl-[pyruvate, phosphate dikinase] + diphosphate. In terms of biological role, bifunctional serine/threonine kinase and phosphorylase involved in the regulation of the pyruvate, phosphate dikinase (PPDK) by catalyzing its phosphorylation/dephosphorylation. This is Putative pyruvate, phosphate dikinase regulatory protein from Rhizobium leguminosarum bv. trifolii (strain WSM2304).